The sequence spans 185 residues: Ethylene-responsive transcription factor ERF017 (185 aa).

The AP2/ERF DNA-binding region spans 11–68 (KYKGVRKRKWGKWVSEIRLPNSRERIWLGSYDTPEKAARAFDAALYCLRGNNAKFNFP).

It belongs to the AP2/ERF transcription factor family. ERF subfamily.

The protein resides in the nucleus. In terms of biological role, probably acts as a transcriptional activator. Binds to the GCC-box pathogenesis-related promoter element. May be involved in the regulation of gene expression by stress factors and by components of stress signal transduction pathways. The chain is Ethylene-responsive transcription factor ERF017 (ERF017) from Arabidopsis thaliana (Mouse-ear cress).